Consider the following 371-residue polypeptide: 4-hydroxy-3-methylbut-2-en-1-yl diphosphate synthase (flavodoxin) (371 aa).

[4Fe-4S] cluster is bound by residues cysteine 270, cysteine 273, cysteine 305, and glutamate 312.

This sequence belongs to the IspG family. It depends on [4Fe-4S] cluster as a cofactor.

It catalyses the reaction (2E)-4-hydroxy-3-methylbut-2-enyl diphosphate + oxidized [flavodoxin] + H2O + 2 H(+) = 2-C-methyl-D-erythritol 2,4-cyclic diphosphate + reduced [flavodoxin]. It functions in the pathway isoprenoid biosynthesis; isopentenyl diphosphate biosynthesis via DXP pathway; isopentenyl diphosphate from 1-deoxy-D-xylulose 5-phosphate: step 5/6. Functionally, converts 2C-methyl-D-erythritol 2,4-cyclodiphosphate (ME-2,4cPP) into 1-hydroxy-2-methyl-2-(E)-butenyl 4-diphosphate. The polypeptide is 4-hydroxy-3-methylbut-2-en-1-yl diphosphate synthase (flavodoxin) (Shewanella sediminis (strain HAW-EB3)).